A 359-amino-acid polypeptide reads, in one-letter code: Uroporphyrinogen decarboxylase (359 aa).

Coproporphyrinogen III is bound by residues arginine 28, alanine 30, arginine 32, aspartate 79, tyrosine 157, serine 212, and histidine 335.

Belongs to the uroporphyrinogen decarboxylase family. Monomer.

The protein localises to the nucleus. The protein resides in the cytoplasm. It catalyses the reaction uroporphyrinogen III + 4 H(+) = coproporphyrinogen III + 4 CO2. It carries out the reaction uroporphyrinogen I + 4 H(+) = coproporphyrinogen I + 4 CO2. Its pathway is porphyrin-containing compound metabolism; protoporphyrin-IX biosynthesis; coproporphyrinogen-III from 5-aminolevulinate: step 4/4. Catalyzes the sequential decarboxylation of four acetate groups of uroporphyrinogen-III (octacarboxyporphyrin) to yield coproporphyrinogen-III (tetracarboxyporphyrin) with the formation of intermediate hepta-, hexa- and penta-carboxylate porphyrinogens in the heme biosynthesis pathway. Acts on a number of porphyrinogens, but only coproporphyrinogen III can ultimately be converted to heme. The chain is Uroporphyrinogen decarboxylase (hem12) from Schizosaccharomyces pombe (strain 972 / ATCC 24843) (Fission yeast).